The following is a 716-amino-acid chain: DNA ligase (716 aa).

NAD(+) is bound by residues 42–46, 91–92, and Glu125; these read DAEYD and SL. The N6-AMP-lysine intermediate role is filled by Lys127. NAD(+)-binding residues include Arg148, Glu184, Lys300, and Lys324. Zn(2+) is bound by residues Cys429, Cys432, Cys447, and Cys453. The 79-residue stretch at 638 to 716 folds into the BRCT domain; sequence TASSPIAGKI…EEAWLQLIEG (79 aa).

Belongs to the NAD-dependent DNA ligase family. LigA subfamily. It depends on Mg(2+) as a cofactor. Requires Mn(2+) as cofactor.

It catalyses the reaction NAD(+) + (deoxyribonucleotide)n-3'-hydroxyl + 5'-phospho-(deoxyribonucleotide)m = (deoxyribonucleotide)n+m + AMP + beta-nicotinamide D-nucleotide.. In terms of biological role, DNA ligase that catalyzes the formation of phosphodiester linkages between 5'-phosphoryl and 3'-hydroxyl groups in double-stranded DNA using NAD as a coenzyme and as the energy source for the reaction. It is essential for DNA replication and repair of damaged DNA. In Bartonella henselae (strain ATCC 49882 / DSM 28221 / CCUG 30454 / Houston 1) (Rochalimaea henselae), this protein is DNA ligase.